The sequence spans 482 residues: Membrane-bound lytic murein transglycosylase F (482 aa).

An N-terminal signal peptide occupies residues 1–13 (MKGLFLRIITALA). Positions 14-267 (LLFWAIDMVF…NLKEKYLGHI (254 aa)) are non-LT domain. An LT domain region spans residues 268-482 (SQFDYVDTRS…NLEEIKENKD (215 aa)). Glutamate 312 is a catalytic residue.

It in the N-terminal section; belongs to the bacterial solute-binding protein 3 family. This sequence in the C-terminal section; belongs to the transglycosylase Slt family.

Its subcellular location is the cell outer membrane. It carries out the reaction Exolytic cleavage of the (1-&gt;4)-beta-glycosidic linkage between N-acetylmuramic acid (MurNAc) and N-acetylglucosamine (GlcNAc) residues in peptidoglycan, from either the reducing or the non-reducing ends of the peptidoglycan chains, with concomitant formation of a 1,6-anhydrobond in the MurNAc residue.. In terms of biological role, murein-degrading enzyme that degrades murein glycan strands and insoluble, high-molecular weight murein sacculi, with the concomitant formation of a 1,6-anhydromuramoyl product. Lytic transglycosylases (LTs) play an integral role in the metabolism of the peptidoglycan (PG) sacculus. Their lytic action creates space within the PG sacculus to allow for its expansion as well as for the insertion of various structures such as secretion systems and flagella. In Haemophilus influenzae (strain PittEE), this protein is Membrane-bound lytic murein transglycosylase F.